We begin with the raw amino-acid sequence, 129 residues long: Dynein 14 kDa light chain, flagellar outer arm (129 aa).

Residues 2-109 (AFITEIANEA…LNRIVTELSG (108 aa)) enclose the Thioredoxin domain. Cys-34 and Cys-37 are disulfide-bonded. Residues 107–129 (LSGKNPPPAAPAAAPAAPAAEAS) are disordered. A compositionally biased stretch (low complexity) spans 117–129 (PAAAPAAPAAEAS).

In terms of assembly, consists of at least 3 heavy chains (alpha, beta and gamma), 2 intermediate chains and 8 light chains.

It localises to the cell projection. The protein resides in the cilium. Its subcellular location is the flagellum. The protein localises to the cytoplasm. It is found in the cytoskeleton. It localises to the flagellum axoneme. May be involved in regulating the redox state of functionally important thiol groups within dynein. The sequence is that of Dynein 14 kDa light chain, flagellar outer arm from Chlamydomonas reinhardtii (Chlamydomonas smithii).